Here is an 863-residue protein sequence, read N- to C-terminus: Paramyosin (863 aa).

The nonhelical region stretch occupies residues 1 to 18 (MSESHVKISRTIIRGTSP). A coiled-coil region spans residues 19 to 836 (STVRLESRVR…ERTITIKRTI (818 aa)). Positions 837 to 863 (GGPGSRAVSVVREINSVSRGNRATSIM) are nonhelical region.

Belongs to the paramyosin family. As to quaternary structure, homodimer or monomer in secreted form.

The protein localises to the cytoplasm. It localises to the myofibril. Its subcellular location is the secreted. Paramyosin is a major structural component of many thick filaments isolated from invertebrate muscles. It is a prominent antigen in human cysticercosis, may have a role as a modulator of the host immune response. It is able to bind collagen and has complement inhibitor activity. This Taenia solium (Pork tapeworm) protein is Paramyosin (PMY).